Here is a 786-residue protein sequence, read N- to C-terminus: MPPKPLFPNVFPGDGAPRKRRLALALLAVPGLVPAVSYAQLSGAAAQPQPLDSPWDLRLAPQLEDHPLKDGAKPAAFVIADHTSGTAEQDLAAKGSAELRRGDAVVKADAIHYDQDTDMADAYGQVKVINGGTSFAGPEAHLKIEANQGFMTAPKYHFNVTGGSGSAERVDMVDNERSVFVNGTYTACQCSTNPAWYIKGSRFDFDTGADEGTARNGVLFFQGVPIFASPWMTFPLSGERRSGLLPPTFSMNSSNGFELSLPYYFNIAPNRDLTLTPRIISRRGVMTEATFRYLSPSYSGTFTANYLPDDRLAHRNRYAIYWQHQQNFGGGFGGYVYYNKVSDNTYPEDLGSANQFINGTQTLYQQEAGLTYNNGPWSVLARYQHWQTLPPSIAPYSREPQLNVKYTKYNVGGFDFGAEADYSRFRITTADATEGDRIVFNPYISYGVYGPGYFVVPKVQYHFASYDLNYLSSTTPNSPKRFTESIPTVTFDTGLIFDRSVRLFGQDFIQTLEPRLYYVYTPYRDQSNAPLFDTAESDFGLAEIYQPNTFVGNDRIADANRITAGLTSRFIDPRTGDERARFVIAQQYYFADQRVTLNPGQAAVLARHSDLIVGAALKLGSGFMSETAFQYNQNNNQLVKSSVGFGYSPGERRVINVGYRYTRANTTLDNQPINQFLVSAQWPLTRRLYAIGRFNYDLAGDRVVDGLVGLQYDADCWALGVGVQRAANGINSSGQQNSSTRFMMQLTLKGLSTVDNGLVSAFRAGVPGYTPLPPPPPPMSRFSNYE.

Residues Met-1–Ala-39 form the signal peptide. The interval Pro-767–Glu-786 is disordered. Residues Thr-770 to Met-779 show a composition bias toward pro residues.

This sequence belongs to the LptD family. As to quaternary structure, component of the lipopolysaccharide transport and assembly complex. Interacts with LptE and LptA.

The protein localises to the cell outer membrane. Together with LptE, is involved in the assembly of lipopolysaccharide (LPS) at the surface of the outer membrane. In Burkholderia cenocepacia (strain HI2424), this protein is LPS-assembly protein LptD.